The chain runs to 165 residues: Crossover junction endodeoxyribonuclease RuvC (165 aa).

Active-site residues include aspartate 6, glutamate 67, and aspartate 142. Mg(2+)-binding residues include aspartate 6, glutamate 67, and aspartate 142.

Belongs to the RuvC family. In terms of assembly, homodimer which binds Holliday junction (HJ) DNA. The HJ becomes 2-fold symmetrical on binding to RuvC with unstacked arms; it has a different conformation from HJ DNA in complex with RuvA. In the full resolvosome a probable DNA-RuvA(4)-RuvB(12)-RuvC(2) complex forms which resolves the HJ. Mg(2+) serves as cofactor.

Its subcellular location is the cytoplasm. The catalysed reaction is Endonucleolytic cleavage at a junction such as a reciprocal single-stranded crossover between two homologous DNA duplexes (Holliday junction).. In terms of biological role, the RuvA-RuvB-RuvC complex processes Holliday junction (HJ) DNA during genetic recombination and DNA repair. Endonuclease that resolves HJ intermediates. Cleaves cruciform DNA by making single-stranded nicks across the HJ at symmetrical positions within the homologous arms, yielding a 5'-phosphate and a 3'-hydroxyl group; requires a central core of homology in the junction. The consensus cleavage sequence is 5'-(A/T)TT(C/G)-3'. Cleavage occurs on the 3'-side of the TT dinucleotide at the point of strand exchange. HJ branch migration catalyzed by RuvA-RuvB allows RuvC to scan DNA until it finds its consensus sequence, where it cleaves and resolves the cruciform DNA. The sequence is that of Crossover junction endodeoxyribonuclease RuvC from Chlamydia abortus (strain DSM 27085 / S26/3) (Chlamydophila abortus).